Reading from the N-terminus, the 412-residue chain is Palmitoyltransferase ZDHHC11 (412 aa).

At 1-42 (MDTRSGSQCSVTPEAILNNEKLVLPPRISRVNGWSLPLHYFQ) the chain is on the cytoplasmic side. The helical transmembrane segment at 43–63 (VVTWAVFVGLSSATFGIFIPF) threads the bilayer. The Lumenal segment spans residues 64–69 (LPHAWK). A helical transmembrane segment spans residues 70–90 (YIAYVVTGGIFSFHLVVHLIA). Over 91 to 176 (SCIDPADSNV…YWFFFSTVAS (86 aa)) the chain is Cytoplasmic. One can recognise a DHHC domain in the interval 125-175 (QFCHLCKVTVNKKTKHCISCNKCVSGFDHHCKWINNCVGSRNYWFFFSTVA). The active-site S-palmitoyl cysteine intermediate is the cysteine 155. Residues 177 to 197 (ATAGMLCLIAILLYVLVQYLV) traverse the membrane as a helical segment. Over 198–230 (NPGVLRTDPRYEDVKNMNTWLLFLPLFPVQVQT) the chain is Lumenal. Residues 198-412 (NPGVLRTDPR…MKTDSAESED (215 aa)) form a mediates interaction with IRF3 and STING1 region. Residues 231–251 (LIVVIIGMLVLLLDFLGLVHL) form a helical membrane-spanning segment. The Cytoplasmic segment spans residues 252-412 (GQLLIFHIYL…MKTDSAESED (161 aa)). The interval 374 to 412 (HPDGGSMAQEADDAPSISTLGLQQETTEPMKTDSAESED) is disordered. Positions 389–400 (SISTLGLQQETT) are enriched in polar residues. Over residues 401 to 412 (EPMKTDSAESED) the composition is skewed to basic and acidic residues.

This sequence belongs to the DHHC palmitoyltransferase family. As to quaternary structure, interacts with IRF3 and STING1; in presence of DNA viruses recruits IRF3 to STING1 promoting IRF3 phosphorylation and activation. In terms of tissue distribution, expressed in testis.

It localises to the endoplasmic reticulum membrane. The enzyme catalyses L-cysteinyl-[protein] + hexadecanoyl-CoA = S-hexadecanoyl-L-cysteinyl-[protein] + CoA. Endoplasmic reticulum-localized palmitoyltransferase that could catalyze the addition of palmitate onto various protein substrates and be involved in a variety of cellular processes. Has a palmitoyltransferase activity toward NCDN and regulates NCDN association with endosome membranes through this palmitoylation. May play a role in cell proliferation. Its function is as follows. Also has a palmitoyltransferase activity-independent function in DNA virus-triggered and CGAS-mediated innate immune response. Functions as an adapter that recruits IRF3 to STING1 to promote the activation of that key transcriptional regulator of type I interferon (IFN)-dependent immune response. The protein is Palmitoyltransferase ZDHHC11 of Homo sapiens (Human).